The following is a 668-amino-acid chain: DNA ligase (668 aa).

Residues 37-41 (DAIYD), 86-87 (SL), and E116 each bind NAD(+). The N6-AMP-lysine intermediate role is filled by K118. NAD(+) is bound by residues R139, E176, K289, and K313. Zn(2+) contacts are provided by C407, C410, C425, and C430. In terms of domain architecture, BRCT spans 586-668 (AQSSALAGLT…RALIETREMP (83 aa)).

It belongs to the NAD-dependent DNA ligase family. LigA subfamily. Requires Mg(2+) as cofactor. It depends on Mn(2+) as a cofactor.

The catalysed reaction is NAD(+) + (deoxyribonucleotide)n-3'-hydroxyl + 5'-phospho-(deoxyribonucleotide)m = (deoxyribonucleotide)n+m + AMP + beta-nicotinamide D-nucleotide.. Functionally, DNA ligase that catalyzes the formation of phosphodiester linkages between 5'-phosphoryl and 3'-hydroxyl groups in double-stranded DNA using NAD as a coenzyme and as the energy source for the reaction. It is essential for DNA replication and repair of damaged DNA. In Gloeobacter violaceus (strain ATCC 29082 / PCC 7421), this protein is DNA ligase.